Reading from the N-terminus, the 185-residue chain is Dehydrin ERD14 (185 aa).

Basic and acidic residues-rich tracts occupy residues 1-13, 25-45, 52-78, and 103-134; these read MAEEIKNVPEQEV, VTDRGLFDFLGKKKDETKPEE, FEQKVHISEPEPEVKHESLLEKLHRSD, and KPTTEVEVKEEEKKGFMEKLKEKLPGHKKPED. Disordered stretches follow at residues 1-138 and 166-185; these read MAEE…GSAV and EKLPGYHPKTTVEEEKKDKE. An N-acetylalanine modification is found at alanine 2. Serine 59 bears the Phosphoserine mark. 2 repeat units span residues 112 to 132 and 154 to 174. Positions 112–174 are 2 X 21 AA repeats, Lys-rich; that stretch reads EEEKKGFMEK…KEKLPGYHPK (63 aa).

Belongs to the plant dehydrin family. As to expression, in stems, cauline leaves, roots and flowers. Low levels found in maturing seeds. Absent in dry seeds.

In terms of biological role, intrinsically disordered protein acting as a chaperone. Prevents heat-induced aggregation and/or inactivation of various substrates. Binds to acidic phospholipid vesicles without affecting membrane fluidity. This is Dehydrin ERD14 (ERD14) from Arabidopsis thaliana (Mouse-ear cress).